We begin with the raw amino-acid sequence, 277 residues long: MIOREX complex component 2 (277 aa).

Belongs to the NAD(P)-dependent epimerase/dehydratase family. In terms of assembly, associates with the mitochondrial ribosome. Component of a multi-subunit COQ enzyme complex.

It is found in the mitochondrion. The protein operates within cofactor biosynthesis; ubiquinone biosynthesis. Its function is as follows. Component of MIOREX complexes, large expressome-like assemblies of ribosomes with factors involved in all the steps of post-transcriptional gene expression. Component of a multi-subunit COQ enzyme complex required for coenzyme Q biosynthesis. This chain is MIOREX complex component 2, found in Saccharomyces cerevisiae (strain ATCC 204508 / S288c) (Baker's yeast).